Reading from the N-terminus, the 511-residue chain is Probable G-protein coupled receptor 152 (511 aa).

Positions 1-20 are disordered; it reads MDTAVEANLGAAGHGPRTEL. Over 1-33 the chain is Extracellular; sequence MDTAVEANLGAAGHGPRTELSDEDYYPQGSWDT. A helical membrane pass occupies residues 34–54; it reads VFLVALLLLGLPANGLMAWLA. Residues 55–65 lie on the Cytoplasmic side of the membrane; that stretch reads GSQARHGAGTR. The helical transmembrane segment at 66-86 threads the bilayer; that stretch reads LALLLLSLALSDFLFLAAATF. At 87–105 the chain is on the extracellular side; that stretch reads QILEIQHGGHWPLGTAACR. A disulfide bridge links Cys-104 with Cys-182. A helical transmembrane segment spans residues 106 to 126; the sequence is FYYFLWGVSYSSGLFLLTALS. The Cytoplasmic segment spans residues 127–148; sequence LDRCLLALCPRWYPGHRPARLP. A helical membrane pass occupies residues 149–169; it reads LWVCAGVWVLATLFSVPWLVF. Residues 170 to 194 are Extracellular-facing; that stretch reads PEAAVWWYDLVICLDFWDTEELPLR. The chain crosses the membrane as a helical span at residues 195–215; it reads MLEILGGFLPFLLLLVCHVLT. The Cytoplasmic portion of the chain corresponds to 216–258; that stretch reads QATACRTCCGHQPRRMACHGFARVAKTILSAYVVLRLPYQLAQ. Residues 259 to 279 form a helical membrane-spanning segment; it reads LLYLAFLWDVYPGYLLWEALV. Over 280–282 the chain is Extracellular; the sequence is YSD. Residues 283 to 303 form a helical membrane-spanning segment; it reads YLILLNSCLSPFLCLAASADL. Residues 304-511 are Cytoplasmic-facing; it reads RALLRTVLSS…PEEAPSAGPT (208 aa). Disordered regions lie at residues 328–349, 361–386, and 407–511; these read PAEPQTLPGPTSEGQSRLDSVV, SDSVVQPEVSPSAQPQSDSVAQPTVG, and PQLD…AGPT. Composition is skewed to polar residues over residues 335–345 and 369–386; these read PGPTSEGQSRL and VSPSAQPQSDSVAQPTVG. Residues 419–433 show a composition bias toward low complexity; it reads PSAQPQSKSVVQPQV. Polar residues-rich tracts occupy residues 435 to 453 and 462 to 473; these read PLTQPQLDPVAQPQSNTET and SASNPGEENSSG.

This sequence belongs to the G-protein coupled receptor 1 family.

The protein resides in the cell membrane. Functionally, orphan receptor. In Mus musculus (Mouse), this protein is Probable G-protein coupled receptor 152 (Gpr152).